Consider the following 186-residue polypeptide: Ribosome-recycling factor (186 aa).

It belongs to the RRF family.

The protein localises to the cytoplasm. Responsible for the release of ribosomes from messenger RNA at the termination of protein biosynthesis. May increase the efficiency of translation by recycling ribosomes from one round of translation to another. The polypeptide is Ribosome-recycling factor (Rickettsia conorii (strain ATCC VR-613 / Malish 7)).